The primary structure comprises 383 residues: Neuropeptide Y receptor type 1 (383 aa).

The Extracellular segment spans residues 1–34 (MNSTSFSQLENHSVHYNLSEEKPSFFAFENDDCH). N-linked (GlcNAc...) asparagine glycans are attached at residues Asn-2, Asn-11, and Asn-17. Residues 35–55 (LPLAVIFTLALAYGAVIILGV) traverse the membrane as a helical segment. Residues 56 to 87 (SGNLALILIILKQKEMRNVTNILIVNLSFSDL) are Cytoplasmic-facing. Residues 88–108 (LVAIMCLPFTFVYTLMDHWIF) traverse the membrane as a helical segment. Residues 109-116 (GEIMCKLN) lie on the Extracellular side of the membrane. A disulfide bridge connects residues Cys-113 and Cys-198. A helical transmembrane segment spans residues 117–137 (PFVQCVSITVSIFSLVLIAVE). The Cytoplasmic portion of the chain corresponds to 138–154 (RHQLIINPRGWRPNNRH). Residues 155-175 (AYIGIAVIWVLAVASSLPFMI) traverse the membrane as a helical segment. Over 176 to 211 (YQVLTDEPFQNVTLDAFKDKLVCFDQFPSDSHRLSY) the chain is Extracellular. Residues 212–232 (TTLLLVLQYFGPLCFIFICYF) form a helical membrane-spanning segment. Over 233-260 (KIYIRLKRRNNMMDKMRDSKYRSSESKR) the chain is Cytoplasmic. The chain crosses the membrane as a helical span at residues 261–281 (INIMLLSIVVAFAVCWLPLTI). At 282 to 299 (FNTVFDWNHQIIATCNHN) the chain is on the extracellular side. The chain crosses the membrane as a helical span at residues 300 to 320 (LLFLLCHLTAMISTCVNPIFY). At 321 to 383 (GFLNKNFQRD…KISCVENEKI (63 aa)) the chain is on the cytoplasmic side. A lipid anchor (S-palmitoyl cysteine) is attached at Cys-338. Phosphoserine is present on residues Ser-368 and Ser-376.

This sequence belongs to the G-protein coupled receptor 1 family.

Its subcellular location is the cell membrane. Its function is as follows. Receptor for neuropeptide Y and peptide YY. This is Neuropeptide Y receptor type 1 (NPY1R) from Cavia porcellus (Guinea pig).